Here is a 545-residue protein sequence, read N- to C-terminus: Chaperonin GroEL 2 (545 aa).

Residues 29–32, 86–90, Gly414, and Asp499 contribute to the ATP site; these read TLGP and DGTTT.

This sequence belongs to the chaperonin (HSP60) family. In terms of assembly, forms a cylinder of 14 subunits composed of two heptameric rings stacked back-to-back. Interacts with the co-chaperonin GroES.

Its subcellular location is the cytoplasm. It catalyses the reaction ATP + H2O + a folded polypeptide = ADP + phosphate + an unfolded polypeptide.. Its function is as follows. Together with its co-chaperonin GroES, plays an essential role in assisting protein folding. The GroEL-GroES system forms a nano-cage that allows encapsulation of the non-native substrate proteins and provides a physical environment optimized to promote and accelerate protein folding. This Chloroflexus aurantiacus (strain ATCC 29366 / DSM 635 / J-10-fl) protein is Chaperonin GroEL 2.